Here is a 105-residue protein sequence, read N- to C-terminus: Probable non-functional immunoglobulin lambda variable 5-48 (105 aa).

The first 19 residues, 1–19, serve as a signal peptide directing secretion; sequence MAWTPLLLLFLSHCTGSLS. The interval 20–44 is framework-1; it reads QAVLTQPTSLSASPGASARLTCTLR. The Ig-like domain maps to 20-105; sequence QAVLTQPTSL…NAGILFISGL (86 aa). Residues 45 to 53 form a complementarity-determining-1 region; sequence SGISVGSYR. The interval 54–70 is framework-2; sequence IYWYQQKPGSPPRYLLN. Positions 71 to 77 are complementarity-determining-2; that stretch reads YYSDSDK. Residues 78–105 form a framework-3 region; that stretch reads HQGSGVPSRFSGSKDASTNAGILFISGL.

As to quaternary structure, immunoglobulins are composed of two identical heavy chains and two identical light chains; disulfide-linked.

It is found in the secreted. Its subcellular location is the cell membrane. Probable non-functional open reading frame (ORF) of V region of the variable domain of immunoglobulin light chains. Non-functional ORF generally cannot participate in the synthesis of a productive immunoglobulin chain due to altered V-(D)-J or switch recombination and/or splicing site (at mRNA level) and/or conserved amino acid change (protein level). Immunoglobulins, also known as antibodies, are membrane-bound or secreted glycoproteins produced by B lymphocytes. In the recognition phase of humoral immunity, the membrane-bound immunoglobulins serve as receptors which, upon binding of a specific antigen, trigger the clonal expansion and differentiation of B lymphocytes into immunoglobulins-secreting plasma cells. Secreted immunoglobulins mediate the effector phase of humoral immunity, which results in the elimination of bound antigens. The antigen binding site is formed by the variable domain of one heavy chain, together with that of its associated light chain. Thus, each immunoglobulin has two antigen binding sites with remarkable affinity for a particular antigen. The variable domains are assembled by a process called V-(D)-J rearrangement and can then be subjected to somatic hypermutations which, after exposure to antigen and selection, allow affinity maturation for a particular antigen. In Homo sapiens (Human), this protein is Probable non-functional immunoglobulin lambda variable 5-48.